Reading from the N-terminus, the 396-residue chain is 1-deoxy-D-xylulose 5-phosphate reductoisomerase (396 aa).

Residues Thr-15, Gly-16, Ser-17, Ile-18, Gly-41, and Asn-129 each coordinate NADPH. Position 130 (Lys-130) interacts with 1-deoxy-D-xylulose 5-phosphate. Residue Glu-131 coordinates NADPH. Asp-155 provides a ligand contact to Mn(2+). 1-deoxy-D-xylulose 5-phosphate-binding residues include Ser-156, Glu-157, Ser-182, and His-205. Glu-157 serves as a coordination point for Mn(2+). Gly-211 is an NADPH binding site. Residues Ser-218, Asn-223, Lys-224, and Glu-227 each coordinate 1-deoxy-D-xylulose 5-phosphate. Glu-227 contributes to the Mn(2+) binding site.

Belongs to the DXR family. The cofactor is Mg(2+). Mn(2+) serves as cofactor.

The catalysed reaction is 2-C-methyl-D-erythritol 4-phosphate + NADP(+) = 1-deoxy-D-xylulose 5-phosphate + NADPH + H(+). It functions in the pathway isoprenoid biosynthesis; isopentenyl diphosphate biosynthesis via DXP pathway; isopentenyl diphosphate from 1-deoxy-D-xylulose 5-phosphate: step 1/6. Catalyzes the NADPH-dependent rearrangement and reduction of 1-deoxy-D-xylulose-5-phosphate (DXP) to 2-C-methyl-D-erythritol 4-phosphate (MEP). This Xanthomonas oryzae pv. oryzae (strain PXO99A) protein is 1-deoxy-D-xylulose 5-phosphate reductoisomerase.